Consider the following 500-residue polypeptide: NAD(P)H-quinone oxidoreductase chain 4, chloroplastic (500 aa).

The next 14 helical transmembrane spans lie at 4 to 24 (FPWL…IFVF), 35 to 55 (YTIF…SYYF), 84 to 104 (GLSL…TLAA), 113 to 133 (LFHF…SSQN), 134 to 154 (LLLF…LLAM), 167 to 187 (FILY…GIAF), 211 to 231 (ILFY…IPLH), 242 to 262 (HYST…YGLV), 272 to 292 (AHSI…IYAA), 305 to 325 (IAYS…SISD), 330 to 350 (GAIL…FLSG), 386 to 406 (LALP…GIIT), 416 to 436 (ILIT…LLSM), and 463 to 483 (FVSI…DFVF).

It belongs to the complex I subunit 4 family.

It localises to the plastid. The protein resides in the chloroplast thylakoid membrane. It catalyses the reaction a plastoquinone + NADH + (n+1) H(+)(in) = a plastoquinol + NAD(+) + n H(+)(out). It carries out the reaction a plastoquinone + NADPH + (n+1) H(+)(in) = a plastoquinol + NADP(+) + n H(+)(out). The protein is NAD(P)H-quinone oxidoreductase chain 4, chloroplastic of Populus trichocarpa (Western balsam poplar).